Here is a 115-residue protein sequence, read N- to C-terminus: Cytochrome c (115 aa).

Heme c is bound by residues Cys26, Cys29, His30, and Met91.

The protein belongs to the cytochrome c family. Binds 1 heme c group covalently per subunit.

The protein resides in the mitochondrion intermembrane space. In terms of biological role, electron carrier protein. The oxidized form of the cytochrome c heme group can accept an electron from the heme group of the cytochrome c1 subunit of cytochrome reductase. Cytochrome c then transfers this electron to the cytochrome oxidase complex, the final protein carrier in the mitochondrial electron-transport chain. In Theileria annulata, this protein is Cytochrome c.